Here is a 210-residue protein sequence, read N- to C-terminus: Endonuclease III (210 aa).

One can recognise a HhH domain in the interval 108–127; that stretch reads RIELESLPGVGRKTANIILN. [4Fe-4S] cluster is bound by residues Cys-187, Cys-194, Cys-197, and Cys-203.

This sequence belongs to the Nth/MutY family. It depends on [4Fe-4S] cluster as a cofactor.

The catalysed reaction is 2'-deoxyribonucleotide-(2'-deoxyribose 5'-phosphate)-2'-deoxyribonucleotide-DNA = a 3'-end 2'-deoxyribonucleotide-(2,3-dehydro-2,3-deoxyribose 5'-phosphate)-DNA + a 5'-end 5'-phospho-2'-deoxyribonucleoside-DNA + H(+). In terms of biological role, DNA repair enzyme that has both DNA N-glycosylase activity and AP-lyase activity. The DNA N-glycosylase activity releases various damaged pyrimidines from DNA by cleaving the N-glycosidic bond, leaving an AP (apurinic/apyrimidinic) site. The AP-lyase activity cleaves the phosphodiester bond 3' to the AP site by a beta-elimination, leaving a 3'-terminal unsaturated sugar and a product with a terminal 5'-phosphate. In Buchnera aphidicola subsp. Acyrthosiphon pisum (strain APS) (Acyrthosiphon pisum symbiotic bacterium), this protein is Endonuclease III.